Reading from the N-terminus, the 265-residue chain is 3-methyl-2-oxobutanoate hydroxymethyltransferase (265 aa).

Mg(2+) contacts are provided by Asp-41 and Asp-80. Residues Asp-41–Ser-42, Asp-80, and Lys-110 contribute to the 3-methyl-2-oxobutanoate site. Glu-112 serves as a coordination point for Mg(2+). Glu-179 (proton acceptor) is an active-site residue.

It belongs to the PanB family. As to quaternary structure, homodecamer; pentamer of dimers. Mg(2+) serves as cofactor.

It is found in the cytoplasm. It carries out the reaction 3-methyl-2-oxobutanoate + (6R)-5,10-methylene-5,6,7,8-tetrahydrofolate + H2O = 2-dehydropantoate + (6S)-5,6,7,8-tetrahydrofolate. It functions in the pathway cofactor biosynthesis; (R)-pantothenate biosynthesis; (R)-pantoate from 3-methyl-2-oxobutanoate: step 1/2. Its function is as follows. Catalyzes the reversible reaction in which hydroxymethyl group from 5,10-methylenetetrahydrofolate is transferred onto alpha-ketoisovalerate to form ketopantoate. The sequence is that of 3-methyl-2-oxobutanoate hydroxymethyltransferase from Pseudothermotoga lettingae (strain ATCC BAA-301 / DSM 14385 / NBRC 107922 / TMO) (Thermotoga lettingae).